The chain runs to 283 residues: Ribosomal RNA small subunit methyltransferase A (283 aa).

6 residues coordinate S-adenosyl-L-methionine: asparagine 29, leucine 31, glycine 56, glutamate 77, aspartate 102, and asparagine 123.

Belongs to the class I-like SAM-binding methyltransferase superfamily. rRNA adenine N(6)-methyltransferase family. RsmA subfamily.

The protein localises to the cytoplasm. It carries out the reaction adenosine(1518)/adenosine(1519) in 16S rRNA + 4 S-adenosyl-L-methionine = N(6)-dimethyladenosine(1518)/N(6)-dimethyladenosine(1519) in 16S rRNA + 4 S-adenosyl-L-homocysteine + 4 H(+). Specifically dimethylates two adjacent adenosines (A1518 and A1519) in the loop of a conserved hairpin near the 3'-end of 16S rRNA in the 30S particle. May play a critical role in biogenesis of 30S subunits. In Acidobacterium capsulatum (strain ATCC 51196 / DSM 11244 / BCRC 80197 / JCM 7670 / NBRC 15755 / NCIMB 13165 / 161), this protein is Ribosomal RNA small subunit methyltransferase A.